Consider the following 567-residue polypeptide: Urease subunit alpha (567 aa).

The Urease domain maps to 129 to 567 (GGIDAHIHFI…LPMAQRYFLF (439 aa)). 3 residues coordinate Ni(2+): histidine 134, histidine 136, and lysine 217. N6-carboxylysine is present on lysine 217. Histidine 219 serves as a coordination point for substrate. Residues histidine 246 and histidine 272 each coordinate Ni(2+). The active-site Proton donor is the histidine 320. Aspartate 360 is a binding site for Ni(2+).

The protein belongs to the metallo-dependent hydrolases superfamily. Urease alpha subunit family. As to quaternary structure, heterotrimer of UreA (gamma), UreB (beta) and UreC (alpha) subunits. Three heterotrimers associate to form the active enzyme. Ni cation serves as cofactor. In terms of processing, carboxylation allows a single lysine to coordinate two nickel ions.

Its subcellular location is the cytoplasm. The enzyme catalyses urea + 2 H2O + H(+) = hydrogencarbonate + 2 NH4(+). It participates in nitrogen metabolism; urea degradation; CO(2) and NH(3) from urea (urease route): step 1/1. This Teredinibacter turnerae (strain ATCC 39867 / T7901) protein is Urease subunit alpha.